We begin with the raw amino-acid sequence, 186 residues long: Adenylate kinase isoenzyme 6 homolog (186 aa).

Residues glycine 15, glycine 17, lysine 18, serine 19, and threonine 20 each coordinate ATP. The interval 48-71 (NLSNIIKDERLYKEFDDELDASIY) is NMPbind. The interval 126 to 136 (KRNYTKEKIKN) is LID. Arginine 127 is a binding site for ATP.

This sequence belongs to the adenylate kinase family. AK6 subfamily. As to quaternary structure, monomer and homodimer. Interacts with small ribosomal subunit protein uS11. Not a structural component of 43S pre-ribosomes, but transiently interacts with them by binding to uS11.

It is found in the cytoplasm. The protein localises to the nucleus. It catalyses the reaction AMP + ATP = 2 ADP. The enzyme catalyses ATP + H2O = ADP + phosphate + H(+). Its function is as follows. Broad-specificity nucleoside monophosphate (NMP) kinase that catalyzes the reversible transfer of the terminal phosphate group between nucleoside triphosphates and monophosphates. Also has ATPase activity. Involved in the late cytoplasmic maturation steps of the 40S ribosomal particles, specifically 18S rRNA maturation. While NMP activity is not required for ribosome maturation, ATPase activity is. Associates transiently with small ribosomal subunit protein uS11. ATP hydrolysis breaks the interaction with uS11. May temporarily remove uS11 from the ribosome to enable a conformational change of the ribosomal RNA that is needed for the final maturation step of the small ribosomal subunit. Its NMP activity may have a role in nuclear energy homeostasis. The polypeptide is Adenylate kinase isoenzyme 6 homolog (Plasmodium falciparum (isolate 3D7)).